The following is a 298-amino-acid chain: Specificity protein transcription factor 1 (298 aa).

Positions 206–218 (VSSGSESVSARGT) are enriched in low complexity. The disordered stretch occupies residues 206–233 (VSSGSESVSARGTSGSGGTGKYPSSRTA). A C2H2-type zinc finger spans residues 260–284 (HNCHIAGCGKVYNKSSHLKAHLRWH).

This sequence belongs to the Sp1 C2H2-type zinc-finger protein family. Expressed in ASJ sensory neurons, pharyngeal cells, rectal cells, intestine, seam cells, and vulval cells.

Probable transcription factor which modulates gene expression, thereby acting as an ASJ sensory neuron terminal selector gene. The chain is Specificity protein transcription factor 1 from Caenorhabditis elegans.